A 411-amino-acid chain; its full sequence is MDTAYVVGTFDTKGAELGYVAGLVAARGVPVVTVDVSTSGPETGTADARPADVGNVEVAGHHPDGAAAVFTGDRGTAVTAMAVALERFLAGRAVGGVIALGGSGGTALCTPAMRALPVGVPKVMVSTVASGDVSSYVDATDIAMFPSVTDVAGLNRISRRVLGNAAHALAGAMTGDIASTEDKPAVALTMFGVTTPCVTEVASRLEARYDPLVFHATGTGGRAMEKLVDDGLIGAVLDLTTTEVCDLVAGGVMSAGEGRLDAIARTGVPYVGSCGALDMVNFGAFETVPERYRDRNLYVHNPQVTLMRTTPDECREIGSFIAAKLNACRGPVRFLLPEGGVSLLDAPGQPFHDPDADGVLFEVLESELRQDGDRRIVRVPHNINDPAFADAVLTAFEEVLGAGTIQEGQRE.

Belongs to the UPF0261 family.

This chain is UPF0261 protein SACE_5696, found in Saccharopolyspora erythraea (strain ATCC 11635 / DSM 40517 / JCM 4748 / NBRC 13426 / NCIMB 8594 / NRRL 2338).